A 210-amino-acid polypeptide reads, in one-letter code: Mitochondrial import receptor subunit TOM20-2 (210 aa).

At Met1 the chain carries N-acetylmethionine. Residues 1–178 (MEFSTADFER…SSKKKKRNTE (178 aa)) are Cytoplasmic-facing. 2 TPR repeats span residues 42-75 (LLELSQFQPIPEAKLMLNDAISKLEEALTINPGK) and 83-120 (ANAYTAHAFYVHDPEEAKEHFDKATEYFQRAENEDPGN). Gly residues predominate over residues 151-161 (GGGGGGGGGGM). The disordered stretch occupies residues 151–172 (GGGGGGGGGGMASSNVSQSSKK). Residues 179-199 (FTYDVCGWIILACGIVAWVGM) form a helical membrane-spanning segment. At 200 to 210 (AKSLGPPPPAR) the chain is on the mitochondrial intermembrane side.

The protein belongs to the Tom20 family. In terms of assembly, forms part of the preprotein translocase complex of the outer mitochondrial membrane (TOM complex) which consists of at least 6 different proteins (TOM5, TOM6, TOM7, TOM20, TOM22/TOM9 and TOM40). Component of a mitochondrial large protein complex that contains, at least, MIC60, DGS1, TOM40, TOM20 proteins, and petC/RISP. Post-translationally, the N-terminus is blocked. In terms of tissue distribution, expressed in roots, flowers, young cotyledons and leaves.

It localises to the mitochondrion outer membrane. Its function is as follows. Central component of the receptor complex responsible for the recognition and translocation of cytosolically synthesized mitochondrial preproteins. Together with TOM22 functions as the transit peptide receptor at the surface of the mitochondrion outer membrane and facilitates the movement of preproteins into the translocation pore. This Arabidopsis thaliana (Mouse-ear cress) protein is Mitochondrial import receptor subunit TOM20-2.